We begin with the raw amino-acid sequence, 565 residues long: Mediator of RNA polymerase II transcription subunit 1 (565 aa).

Positions 141-170 (SGNNLGSGNGTNGSSLTNKTDKKSVSSGNG) are disordered.

It belongs to the Mediator complex subunit 1 family. Component of the Mediator complex.

The protein resides in the nucleus. Component of the Mediator complex, a coactivator involved in the regulated transcription of nearly all RNA polymerase II-dependent genes. Mediator functions as a bridge to convey information from gene-specific regulatory proteins to the basal RNA polymerase II transcription machinery. Mediator is recruited to promoters by direct interactions with regulatory proteins and serves as a scaffold for the assembly of a functional preinitiation complex with RNA polymerase II and the general transcription factors. This Candida glabrata (strain ATCC 2001 / BCRC 20586 / JCM 3761 / NBRC 0622 / NRRL Y-65 / CBS 138) (Yeast) protein is Mediator of RNA polymerase II transcription subunit 1 (MED1).